Consider the following 218-residue polypeptide: Ribonuclease HII (218 aa).

Residues valine 22–serine 211 enclose the RNase H type-2 domain. Residues aspartate 28, glutamate 29, and aspartate 119 each contribute to the a divalent metal cation site.

Belongs to the RNase HII family. It depends on Mn(2+) as a cofactor. Requires Mg(2+) as cofactor.

The protein resides in the cytoplasm. The catalysed reaction is Endonucleolytic cleavage to 5'-phosphomonoester.. Its function is as follows. Endonuclease that specifically degrades the RNA of RNA-DNA hybrids. The chain is Ribonuclease HII from Maricaulis maris (strain MCS10) (Caulobacter maris).